A 250-amino-acid chain; its full sequence is DNA polymerase sliding clamp (250 aa).

Belongs to the PCNA family. In terms of assembly, homotrimer. The subunits circularize to form a toroid; DNA passes through its center. Replication factor C (RFC) is required to load the toroid on the DNA.

In terms of biological role, sliding clamp subunit that acts as a moving platform for DNA processing. Responsible for tethering the catalytic subunit of DNA polymerase and other proteins to DNA during high-speed replication. This is DNA polymerase sliding clamp from Methanococcus maripaludis (strain C6 / ATCC BAA-1332).